Here is a 357-residue protein sequence, read N- to C-terminus: MSQEAARDAAAGRPVQIHDPTLRDGQHAVRHSLGAEQFRAYLKAADAAAVPVVEVGHGNGLAASSLQVGRARLSDDEMMSIARETLTTSKLGVLMFPGWATTQDIKNALAYEVDLVRIATHCTEASVAERHLGFLRDEGVEAHGMVVMTHMASPDQLAEECARLVGYGATGVGILDSSGHFLPSDVTARIGAICAAVDVPVMFHGHNNLGMAVANSIAAAQAGAGILDACARGFGAGAGNTQLEVLVPVLERLGFRTGIDLYRLLDAADIAGRELMPAPPTIDSVSIVSGLAGVFSGFKKPVLDIAAREGVDPRDIFFELGRRQVVAGQEDLIVEVALALRAARDGASPASSGTGPC.

A disordered region spans residues methionine 1–threonine 21. A Pyruvate carboxyltransferase domain is found at valine 15–leucine 265. Arginine 23 to aspartate 24 serves as a coordination point for substrate. Aspartate 24 serves as a coordination point for Mn(2+). Residue histidine 27 is the Proton acceptor of the active site. Positions 177 and 204 each coordinate substrate. Residues histidine 204 and histidine 206 each coordinate Mn(2+).

The protein belongs to the 4-hydroxy-2-oxovalerate aldolase family.

The enzyme catalyses (S)-4-hydroxy-2-oxopentanoate = acetaldehyde + pyruvate. Its function is as follows. Involved in the biosynthesis of the peptidyl nucleoside antibiotic nikkomycin. This Streptomyces tendae protein is 4-hydroxy-2-oxovalerate aldolase.